Here is a 430-residue protein sequence, read N- to C-terminus: 3-phosphoshikimate 1-carboxyvinyltransferase (430 aa).

The 3-phosphoshikimate site is built by K33, S34, and R38. K33 contacts phosphoenolpyruvate. Residues G101 and R129 each contribute to the phosphoenolpyruvate site. Positions 172, 173, 174, 201, 319, and 346 each coordinate 3-phosphoshikimate. Q174 is a phosphoenolpyruvate binding site. E319 acts as the Proton acceptor in catalysis. Residues R350, R391, and K416 each contribute to the phosphoenolpyruvate site.

This sequence belongs to the EPSP synthase family. Monomer.

The protein localises to the cytoplasm. The enzyme catalyses 3-phosphoshikimate + phosphoenolpyruvate = 5-O-(1-carboxyvinyl)-3-phosphoshikimate + phosphate. It participates in metabolic intermediate biosynthesis; chorismate biosynthesis; chorismate from D-erythrose 4-phosphate and phosphoenolpyruvate: step 6/7. Its function is as follows. Catalyzes the transfer of the enolpyruvyl moiety of phosphoenolpyruvate (PEP) to the 5-hydroxyl of shikimate-3-phosphate (S3P) to produce enolpyruvyl shikimate-3-phosphate and inorganic phosphate. This chain is 3-phosphoshikimate 1-carboxyvinyltransferase, found in Corynebacterium glutamicum (strain ATCC 13032 / DSM 20300 / JCM 1318 / BCRC 11384 / CCUG 27702 / LMG 3730 / NBRC 12168 / NCIMB 10025 / NRRL B-2784 / 534).